Reading from the N-terminus, the 70-residue chain is Cytochrome c oxidase subunit 8B, mitochondrial (70 aa).

The N-terminal 24 residues, 1–24, are a transit peptide targeting the mitochondrion; it reads MPRLPPALRLLQPPLRCWVVPKLH. Residues 25 to 35 are Mitochondrial matrix-facing; that stretch reads VSAKPARTPTS. The chain crosses the membrane as a helical span at residues 36 to 59; it reads PAEQAVGLSMMFLSFLVPAGWVLS. Topologically, residues 60-70 are mitochondrial intermembrane; it reads HLESYKKSSTA.

This sequence belongs to the cytochrome c oxidase VIII family. In terms of assembly, component of the cytochrome c oxidase (complex IV, CIV), a multisubunit enzyme composed of 14 subunits. The complex is composed of a catalytic core of 3 subunits MT-CO1, MT-CO2 and MT-CO3, encoded in the mitochondrial DNA, and 11 supernumerary subunits COX4I, COX5A, COX5B, COX6A, COX6B, COX6C, COX7A, COX7B, COX7C, COX8 and NDUFA4, which are encoded in the nuclear genome. The complex exists as a monomer or a dimer and forms supercomplexes (SCs) in the inner mitochondrial membrane with NADH-ubiquinone oxidoreductase (complex I, CI) and ubiquinol-cytochrome c oxidoreductase (cytochrome b-c1 complex, complex III, CIII), resulting in different assemblies (supercomplex SCI(1)III(2)IV(1) and megacomplex MCI(2)III(2)IV(2)).

Its subcellular location is the mitochondrion inner membrane. It functions in the pathway energy metabolism; oxidative phosphorylation. Functionally, component of the cytochrome c oxidase, the last enzyme in the mitochondrial electron transport chain which drives oxidative phosphorylation. The respiratory chain contains 3 multisubunit complexes succinate dehydrogenase (complex II, CII), ubiquinol-cytochrome c oxidoreductase (cytochrome b-c1 complex, complex III, CIII) and cytochrome c oxidase (complex IV, CIV), that cooperate to transfer electrons derived from NADH and succinate to molecular oxygen, creating an electrochemical gradient over the inner membrane that drives transmembrane transport and the ATP synthase. Cytochrome c oxidase is the component of the respiratory chain that catalyzes the reduction of oxygen to water. Electrons originating from reduced cytochrome c in the intermembrane space (IMS) are transferred via the dinuclear copper A center (CU(A)) of subunit 2 and heme A of subunit 1 to the active site in subunit 1, a binuclear center (BNC) formed by heme A3 and copper B (CU(B)). The BNC reduces molecular oxygen to 2 water molecules using 4 electrons from cytochrome c in the IMS and 4 protons from the mitochondrial matrix. This Eulemur fulvus fulvus (Brown lemur) protein is Cytochrome c oxidase subunit 8B, mitochondrial (COX8B).